The sequence spans 231 residues: AA9 family lytic polysaccharide monooxygenase F (231 aa).

Positions 1–17 are cleaved as a signal peptide; it reads MLPSISLLLAAALGTSA. The Cu(2+) site is built by histidine 18, aspartate 50, and histidine 89. Residue aspartate 50 participates in O2 binding. Cystine bridges form between cysteine 59/cysteine 177 and cysteine 147/cysteine 231. O2-binding residues include histidine 163 and glutamine 172. Tyrosine 174 is a Cu(2+) binding site.

This sequence belongs to the polysaccharide monooxygenase AA9 family. The cofactor is Cu(2+).

It localises to the secreted. It carries out the reaction [(1-&gt;4)-beta-D-glucosyl]n+m + reduced acceptor + O2 = 4-dehydro-beta-D-glucosyl-[(1-&gt;4)-beta-D-glucosyl]n-1 + [(1-&gt;4)-beta-D-glucosyl]m + acceptor + H2O.. Lytic polysaccharide monooxygenase (LPMO) that depolymerizes crystalline and amorphous polysaccharides via the oxidation of scissile alpha- or beta-(1-4)-glycosidic bonds, yielding C1 oxidation products. Catalysis by LPMOs requires the reduction of the active-site copper from Cu(II) to Cu(I) by a reducing agent and H(2)O(2) or O(2) as a cosubstrate. This is AA9 family lytic polysaccharide monooxygenase F (gh61-6) from Neurospora crassa (strain ATCC 24698 / 74-OR23-1A / CBS 708.71 / DSM 1257 / FGSC 987).